Consider the following 281-residue polypeptide: 2-dehydro-3-deoxyphosphooctonate aldolase (281 aa).

The protein belongs to the KdsA family.

The protein resides in the cytoplasm. The catalysed reaction is D-arabinose 5-phosphate + phosphoenolpyruvate + H2O = 3-deoxy-alpha-D-manno-2-octulosonate-8-phosphate + phosphate. It participates in carbohydrate biosynthesis; 3-deoxy-D-manno-octulosonate biosynthesis; 3-deoxy-D-manno-octulosonate from D-ribulose 5-phosphate: step 2/3. It functions in the pathway bacterial outer membrane biogenesis; lipopolysaccharide biosynthesis. In Pseudomonas fluorescens (strain ATCC BAA-477 / NRRL B-23932 / Pf-5), this protein is 2-dehydro-3-deoxyphosphooctonate aldolase.